The following is a 250-amino-acid chain: 1-(5-phosphoribosyl)-5-[(5-phosphoribosylamino)methylideneamino] imidazole-4-carboxamide isomerase (250 aa).

The active-site Proton acceptor is the D12. The active-site Proton donor is the D134.

This sequence belongs to the HisA/HisF family.

The protein localises to the cytoplasm. It carries out the reaction 1-(5-phospho-beta-D-ribosyl)-5-[(5-phospho-beta-D-ribosylamino)methylideneamino]imidazole-4-carboxamide = 5-[(5-phospho-1-deoxy-D-ribulos-1-ylimino)methylamino]-1-(5-phospho-beta-D-ribosyl)imidazole-4-carboxamide. Its pathway is amino-acid biosynthesis; L-histidine biosynthesis; L-histidine from 5-phospho-alpha-D-ribose 1-diphosphate: step 4/9. This chain is 1-(5-phosphoribosyl)-5-[(5-phosphoribosylamino)methylideneamino] imidazole-4-carboxamide isomerase, found in Actinobacillus pleuropneumoniae serotype 5b (strain L20).